The following is a 1009-amino-acid chain: Translation initiation factor IF-2 (1009 aa).

Residues 1-415 (MSDENENGRP…EREKEKRRGG (415 aa)) form a disordered region. The span at 94-110 (EELRARQRVVDAAREAQ) shows a compositional bias: basic and acidic residues. The span at 111–121 (ARQVAEQAAAE) shows a compositional bias: low complexity. Residues 122–136 (ARARAAQEAAQREAA) show a composition bias toward basic and acidic residues. A compositionally biased stretch (low complexity) spans 137–146 (AKAAAERAAA). The segment covering 147 to 174 (APPPVAQAPAAPAPAAPVTPPPAAPQAP) has biased composition (pro residues). Residues 175-189 (RPVAQAPVAPSAPRQ) show a composition bias toward low complexity. Basic and acidic residues-rich tracts occupy residues 208 to 218 (EPSRDRRDDRP) and 251 to 287 (PRPE…RPQG). The span at 311 to 320 (GGPPRGPRPG) shows a compositional bias: pro residues. 2 stretches are compositionally biased toward basic and acidic residues: residues 346–358 (MDRR…DRRK) and 403–415 (RARE…RRGG). The tr-type G domain occupies 505 to 675 (LRPPVVTIMG…LLQAEVLDLK (171 aa)). A G1 region spans residues 514–521 (GHVDHGKT). 514-521 (GHVDHGKT) contacts GTP. The tract at residues 539-543 (GITQH) is G2. A G3 region spans residues 561–564 (DTPG). Residues 561–565 (DTPGH) and 615–618 (NKMD) each bind GTP. Positions 615-618 (NKMD) are G4. A G5 region spans residues 651–653 (SAK).

Belongs to the TRAFAC class translation factor GTPase superfamily. Classic translation factor GTPase family. IF-2 subfamily.

It localises to the cytoplasm. One of the essential components for the initiation of protein synthesis. Protects formylmethionyl-tRNA from spontaneous hydrolysis and promotes its binding to the 30S ribosomal subunits. Also involved in the hydrolysis of GTP during the formation of the 70S ribosomal complex. This is Translation initiation factor IF-2 from Caulobacter vibrioides (strain ATCC 19089 / CIP 103742 / CB 15) (Caulobacter crescentus).